A 382-amino-acid chain; its full sequence is Cell division protein FtsZ (382 aa).

GTP contacts are provided by residues 21–25, 108–110, Glu139, Arg143, and Asp187; these read GGGNN and GTG. The interval 320–382 is disordered; it reads KDVTKPQRPS…TFLRNRNKRG (63 aa). Residues 326–341 show a composition bias toward polar residues; it reads QRPSLNQSIKTHNQSV. Over residues 342–351 the composition is skewed to basic and acidic residues; that stretch reads PKREPKREEP. A compositionally biased stretch (polar residues) spans 352 to 365; that stretch reads QQQNTVSRHTSQPA.

This sequence belongs to the FtsZ family. Homodimer. Polymerizes to form a dynamic ring structure in a strictly GTP-dependent manner. Interacts directly with several other division proteins. Interacts with FtsA. Interacts with Phi29 DNA replication protein 1. Interacts with the cell division inhibitor MciZ.

The protein localises to the cytoplasm. With respect to regulation, during sporulation, is negatively regulated by MciZ, which binds to FtsZ and inhibits its polymerization and the formation of the Z ring. Essential cell division protein that forms a contractile ring structure (Z ring) at the future cell division site. The regulation of the ring assembly controls the timing and the location of cell division. One of the functions of the FtsZ ring is to recruit other cell division proteins to the septum to produce a new cell wall between the dividing cells. Binds GTP and shows GTPase activity. The polypeptide is Cell division protein FtsZ (Bacillus subtilis (strain 168)).